We begin with the raw amino-acid sequence, 246 residues long: MRHQDVAIIIPSRLSSTRLKQKPLQLIGSITLIERVFKQVNQAGLEHTYVATDSEEIASVITKVGGKVIFTDSAIPTGTDRTYEAFKLIPNNQNINYIVNVQGDMPFIEPSSILKIIEYLKNSKYDVVTPIVKVDRESVKASSNVTVAVDSAGTALYFSRSLIPNGAEEFLYHVGMYGFRKNALEKFVSLKPTFLEKTERLEQLRVLENGMTIGTCLVENVPISVDTEEDLKKAVKFYENISKLGL.

The protein belongs to the KdsB family.

It is found in the cytoplasm. The catalysed reaction is 3-deoxy-alpha-D-manno-oct-2-ulosonate + CTP = CMP-3-deoxy-beta-D-manno-octulosonate + diphosphate. The protein operates within nucleotide-sugar biosynthesis; CMP-3-deoxy-D-manno-octulosonate biosynthesis; CMP-3-deoxy-D-manno-octulosonate from 3-deoxy-D-manno-octulosonate and CTP: step 1/1. It functions in the pathway bacterial outer membrane biogenesis; lipopolysaccharide biosynthesis. Activates KDO (a required 8-carbon sugar) for incorporation into bacterial lipopolysaccharide in Gram-negative bacteria. In Rickettsia conorii (strain ATCC VR-613 / Malish 7), this protein is 3-deoxy-manno-octulosonate cytidylyltransferase.